The primary structure comprises 390 residues: Endoglucanase gh5-1 (390 aa).

A signal peptide spans 1–16; that stretch reads MKATILASTFAAGALA. In terms of domain architecture, CBM1 spans 17–52; it reads QSGAWGQCGGNGWSGATSCISGYACNYVNDWYSQCQ. 2 N-linked (GlcNAc...) asparagine glycosylation sites follow: Asn-157 and Asn-261.

The protein belongs to the glycosyl hydrolase 5 (cellulase A) family. N-glycosylated.

It is found in the secreted. It carries out the reaction Endohydrolysis of (1-&gt;4)-beta-D-glucosidic linkages in cellulose, lichenin and cereal beta-D-glucans.. Endoglucanase that plays an important role in biomass degradation. Binds onto plant cell walls to participate in the hydrolysis of cellulose. This Neurospora crassa (strain ATCC 24698 / 74-OR23-1A / CBS 708.71 / DSM 1257 / FGSC 987) protein is Endoglucanase gh5-1.